A 465-amino-acid chain; its full sequence is Chromosomal replication initiator protein DnaA (465 aa).

Positions 1-80 (MLWTDCLTRL…VEILVDSRPG (80 aa)) are domain I, interacts with DnaA modulators. The domain II stretch occupies residues 80–127 (GAILSPAEQPATTTAALSSTPVVPQRVKKEVVEPAATQSNKILNSKKR). A domain III, AAA+ region region spans residues 128–345 (LLNPLFTFSL…GALNKVVAIA (218 aa)). ATP contacts are provided by Gly-173, Gly-175, Lys-176, and Thr-177. A domain IV, binds dsDNA region spans residues 346 to 465 (RFKGSQIDLD…YKNLLRLLQS (120 aa)).

The protein belongs to the DnaA family. As to quaternary structure, oligomerizes as a right-handed, spiral filament on DNA at oriC.

It localises to the cytoplasm. Its function is as follows. Plays an essential role in the initiation and regulation of chromosomal replication. ATP-DnaA binds to the origin of replication (oriC) to initiate formation of the DNA replication initiation complex once per cell cycle. Binds the DnaA box (a 9 base pair repeat at the origin) and separates the double-stranded (ds)DNA. Forms a right-handed helical filament on oriC DNA; dsDNA binds to the exterior of the filament while single-stranded (ss)DNA is stabiized in the filament's interior. The ATP-DnaA-oriC complex binds and stabilizes one strand of the AT-rich DNA unwinding element (DUE), permitting loading of DNA polymerase. After initiation quickly degrades to an ADP-DnaA complex that is not apt for DNA replication. Binds acidic phospholipids. In Acinetobacter baylyi (strain ATCC 33305 / BD413 / ADP1), this protein is Chromosomal replication initiator protein DnaA.